A 206-amino-acid chain; its full sequence is LexA repressor (206 aa).

The H-T-H motif DNA-binding region spans 28–48 (VREICNAVGLSSTSTVHGHLS). Residues Ser-128 and Lys-166 each act as for autocatalytic cleavage activity in the active site.

This sequence belongs to the peptidase S24 family. As to quaternary structure, homodimer.

It catalyses the reaction Hydrolysis of Ala-|-Gly bond in repressor LexA.. Its function is as follows. Represses a number of genes involved in the response to DNA damage (SOS response), including recA and lexA. In the presence of single-stranded DNA, RecA interacts with LexA causing an autocatalytic cleavage which disrupts the DNA-binding part of LexA, leading to derepression of the SOS regulon and eventually DNA repair. The chain is LexA repressor from Ligilactobacillus salivarius (strain UCC118) (Lactobacillus salivarius).